The chain runs to 346 residues: Holliday junction branch migration complex subunit RuvB (346 aa).

The span at 1–11 shows a compositional bias: polar residues; sequence MTEQRTIASSA. A disordered region spans residues 1–20; it reads MTEQRTIASSATREDEAADA. Residues 1-183 are large ATPase domain (RuvB-L); that stretch reads MTEQRTIASS…FGIVQRLEFY (183 aa). ATP-binding positions include I22, R23, G64, K67, T68, T69, 130 to 132, R173, Y183, and R220; that span reads EDF. Mg(2+) is bound at residue T68. Residues 184–254 are small ATPAse domain (RuvB-S); that stretch reads SPQELTRIVI…VAQAAMQMLK (71 aa). The tract at residues 257–346 is head domain (RuvB-H); the sequence is PEGFDELDRR…PAIGEPGDLF (90 aa). DNA contacts are provided by R293, R312, and R317.

The protein belongs to the RuvB family. Homohexamer. Forms an RuvA(8)-RuvB(12)-Holliday junction (HJ) complex. HJ DNA is sandwiched between 2 RuvA tetramers; dsDNA enters through RuvA and exits via RuvB. An RuvB hexamer assembles on each DNA strand where it exits the tetramer. Each RuvB hexamer is contacted by two RuvA subunits (via domain III) on 2 adjacent RuvB subunits; this complex drives branch migration. In the full resolvosome a probable DNA-RuvA(4)-RuvB(12)-RuvC(2) complex forms which resolves the HJ.

It localises to the cytoplasm. The enzyme catalyses ATP + H2O = ADP + phosphate + H(+). Functionally, the RuvA-RuvB-RuvC complex processes Holliday junction (HJ) DNA during genetic recombination and DNA repair, while the RuvA-RuvB complex plays an important role in the rescue of blocked DNA replication forks via replication fork reversal (RFR). RuvA specifically binds to HJ cruciform DNA, conferring on it an open structure. The RuvB hexamer acts as an ATP-dependent pump, pulling dsDNA into and through the RuvAB complex. RuvB forms 2 homohexamers on either side of HJ DNA bound by 1 or 2 RuvA tetramers; 4 subunits per hexamer contact DNA at a time. Coordinated motions by a converter formed by DNA-disengaged RuvB subunits stimulates ATP hydrolysis and nucleotide exchange. Immobilization of the converter enables RuvB to convert the ATP-contained energy into a lever motion, pulling 2 nucleotides of DNA out of the RuvA tetramer per ATP hydrolyzed, thus driving DNA branch migration. The RuvB motors rotate together with the DNA substrate, which together with the progressing nucleotide cycle form the mechanistic basis for DNA recombination by continuous HJ branch migration. Branch migration allows RuvC to scan DNA until it finds its consensus sequence, where it cleaves and resolves cruciform DNA. The protein is Holliday junction branch migration complex subunit RuvB of Xanthomonas campestris pv. campestris (strain ATCC 33913 / DSM 3586 / NCPPB 528 / LMG 568 / P 25).